Consider the following 176-residue polypeptide: Endothelin-2 (176 aa).

Positions 1-22 are cleaved as a signal peptide; sequence MVSPAWCSIALALLLALHEGKG. The propeptide occupies 23 to 44; the sequence is QAAATMEQPASAPKGRGPHLRF. Cystine bridges form between C47–C61 and C49–C57. A propeptide spanning residues 68–176 is cleaved from the precursor; that stretch reads VNTAGQTAPY…IPAHSRRRKR (109 aa). The tract at residues 94–109 is endothelin-like; sequence CECSSAGDSACATFCH.

Belongs to the endothelin/sarafotoxin family.

It localises to the secreted. In terms of biological role, vasoconstrictor. The polypeptide is Endothelin-2 (Edn2) (Rattus norvegicus (Rat)).